The sequence spans 217 residues: Vesicle transport through interaction with t-SNAREs homolog 1A (217 aa).

Topologically, residues 1-192 (MSSDFEGYEQ…GMLRRIIQNR (192 aa)) are cytoplasmic. Coiled coils occupy residues 31–92 (PDEK…KRSR) and 112–178 (ENQR…GKSS). Residues 193-213 (ILLVILGIIVVITILMAITFS) traverse the membrane as a helical segment. Over 214 to 217 (VRRH) the chain is Extracellular.

Belongs to the VTI1 family. Interacts with distinct SNARE complexes that contain either STX5 or STX6. Interacts with NAPA and, to a lesser extent, with NAPG. Identified in a complex containing STX6, STX12, VAMP4 and VTI1A.

The protein localises to the cytoplasmic vesicle. Its subcellular location is the golgi apparatus membrane. Functionally, V-SNARE that mediates vesicle transport pathways through interactions with t-SNAREs on the target membrane. These interactions are proposed to mediate aspects of the specificity of vesicle trafficking and to promote fusion of the lipid bilayers. Involved in vesicular transport from the late endosomes to the trans-Golgi network. Along with VAMP7, involved in an non-conventional RAB1-dependent traffic route to the cell surface used by KCNIP1 and KCND2. May be involved in increased cytokine secretion associated with cellular senescence. In Homo sapiens (Human), this protein is Vesicle transport through interaction with t-SNAREs homolog 1A (VTI1A).